The following is a 669-amino-acid chain: RNA-binding protein 14 (669 aa).

RRM domains are found at residues 1–73 (MKIF…MSRP) and 79–149 (WKIF…LSTK). Glycyl lysine isopeptide (Lys-Gly) (interchain with G-Cter in SUMO2) cross-links involve residues Lys-126, Lys-135, Lys-138, Lys-149, and Lys-153. Disordered stretches follow at residues 147 to 175 (STKGQKKGPGLAVQSGDKTKKPGAGDTAF) and 193 to 232 (NSTGGFDGQARQPTPPFFGRDRSPLRRSPPRASYVAPLTA). Position 161 is a phosphoserine (Ser-161). Position 164 is an N6-acetyllysine; alternate (Lys-164). Residue Lys-164 forms a Glycyl lysine isopeptide (Lys-Gly) (interchain with G-Cter in SUMO2); alternate linkage. Phosphothreonine is present on Thr-206. Phosphoserine occurs at positions 220, 242, 244, 256, 272, and 280. Residues 284–303 (PYRGQLASPSSQSAAASSLG) are disordered. The span at 287–303 (GQLASPSSQSAAASSLG) shows a compositional bias: low complexity. A TRBP-interacting domain; interaction with STIL region spans residues 307 to 354 (GAQPSASALSSYGGQAAAASSLNSYGAQGSSLASYGNQPSSYGAQAAS). Phosphoserine is present on residues Ser-520, Ser-523, Ser-527, and Ser-562. A disordered region spans residues 566-590 (VANANSTPPPYERTRLSPPRASYDD). Thr-572 carries the phosphothreonine modification. Phosphoserine is present on Ser-582. Lys-600 participates in a covalent cross-link: Glycyl lysine isopeptide (Lys-Gly) (interchain with G-Cter in SUMO2). Ser-618, Ser-620, Ser-623, Ser-627, Ser-643, and Ser-649 each carry phosphoserine.

In terms of assembly, isoform 1: Interacts with NCOA6, CITED1 and XRCC5/KU86. Isoform 1: Interacts with SS18 isoform 1. Isoform 1: Interacts with SS18 isoform 2. Interacts with STIL and interferes with its interaction with CPAP. Interacts with gamma-tubulin. Part of the HDP-RNP complex composed of at least HEXIM1, PRKDC, XRCC5, XRCC6, paraspeckle proteins (SFPQ, NONO, PSPC1, RBM14, and MATR3) and NEAT1 RNA. Interacts with RBPMS; the interaction allows cooperative assembly of RNA-bound stable cell-specific alternative splicing regulatory complexes. As to expression, expressed in all tissues tested, including brain, heart, skeletal muscle, colon, thymus, spleen, kidney, liver, small intestine, placenta, lung and peripheral blood lymphocytes.

It is found in the nucleus. The protein localises to the nucleolus. Its subcellular location is the cytoplasm. In terms of biological role, isoform 1 may function as a nuclear receptor coactivator, enhancing transcription through other coactivators such as NCOA6 and CITED1. Isoform 2, functions as a transcriptional repressor, modulating transcriptional activities of coactivators including isoform 1, NCOA6 and CITED1. Regulates centriole biogenesis by suppressing the formation of aberrant centriolar protein complexes in the cytoplasm and thus preserving mitotic spindle integrity. Prevents the formation of the STIL-CPAP complex (which can induce the formation of aberrant centriolar protein complexes) by interfering with the interaction of STIL with CPAP. Plays a role in the regulation of DNA virus-mediated innate immune response by assembling into the HDP-RNP complex, a complex that serves as a platform for IRF3 phosphorylation and subsequent innate immune response activation through the cGAS-STING pathway. Also involved in the regulation of pre-mRNA alternative splicing. In Homo sapiens (Human), this protein is RNA-binding protein 14 (RBM14).